The primary structure comprises 88 residues: MISKTRKAEIIKEFGGSEANTGLAEVQIALLTEDIANMTEHLKEHKKDVPTRRTLLKKVAQRRHLLDFLIKKDVNRYKEIIAKLGLRK.

The protein belongs to the universal ribosomal protein uS15 family. As to quaternary structure, part of the 30S ribosomal subunit. Forms a bridge to the 50S subunit in the 70S ribosome, contacting the 23S rRNA.

In terms of biological role, one of the primary rRNA binding proteins, it binds directly to 16S rRNA where it helps nucleate assembly of the platform of the 30S subunit by binding and bridging several RNA helices of the 16S rRNA. Its function is as follows. Forms an intersubunit bridge (bridge B4) with the 23S rRNA of the 50S subunit in the ribosome. This chain is Small ribosomal subunit protein uS15, found in Mesoplasma florum (strain ATCC 33453 / NBRC 100688 / NCTC 11704 / L1) (Acholeplasma florum).